An 85-amino-acid polypeptide reads, in one-letter code: Protein C4 (85 aa).

Residue Gly2 is the site of N-myristoyl glycine; by host attachment. Positions 42-65 are disordered; the sequence is LNPAPTSSPTSTRTETQLNGGNSR. Over residues 44–57 the composition is skewed to low complexity; that stretch reads PAPTSSPTSTRTET.

Belongs to the geminiviridae protein AC4/C4 family. As to quaternary structure, interacts with Arabidopsis thaliana RCH2, ASK7/ASK-eta and ASK6/ASK-zeta. In terms of processing, phosphorylated by Arabidopsis thaliana ASK7/ASK-eta mainly on threonine and serine residues. Expressed in vascular tissues, and especially in phloem cells.

It is found in the host cell membrane. Functionally, major determinant of pathogenesis that affects the hyperplastic response of the host to viral infection. Mediates the induction of cell division in permissive cells, mainly in phloem. May act as a suppressor of RNA-mediated gene silencing, also known as post-transcriptional gene silencing (PTGS), a mechanism of plant viral defense that limits the accumulation of viral RNAs. This chain is Protein C4, found in Beet curly top virus (strain California/Logan) (BCTV).